Reading from the N-terminus, the 687-residue chain is Methionine--tRNA ligase (687 aa).

The 'HIGH' region signature appears at 14–24 (PYANGYIHLGH). C145, C148, C158, and C161 together coordinate Zn(2+). The 'KMSKS' region motif lies at 329–333 (KMSKS). ATP is bound at residue K332. The tRNA-binding domain maps to 585 to 687 (DFDKVDLRIG…DGAQVGQRVK (103 aa)).

It belongs to the class-I aminoacyl-tRNA synthetase family. MetG type 1 subfamily. Homodimer. Zn(2+) serves as cofactor.

It localises to the cytoplasm. It carries out the reaction tRNA(Met) + L-methionine + ATP = L-methionyl-tRNA(Met) + AMP + diphosphate. Its function is as follows. Is required not only for elongation of protein synthesis but also for the initiation of all mRNA translation through initiator tRNA(fMet) aminoacylation. The protein is Methionine--tRNA ligase of Bdellovibrio bacteriovorus (strain ATCC 15356 / DSM 50701 / NCIMB 9529 / HD100).